The chain runs to 981 residues: Helicase-like transcription factor CHR28 (981 aa).

Disordered stretches follow at residues 1–66 (MDSA…LDSR) and 112–194 (KRTH…RNSE). The span at 46-65 (SGSSSGANGHTKTGLTNLDS) shows a compositional bias: polar residues. Residues 119–128 (FSRPPFPPRP) are compositionally biased toward pro residues. A compositionally biased stretch (polar residues) spans 166 to 176 (HGTSASPSHFN). Positions 181 to 194 (PMHRNGIGEERNSE) are enriched in basic and acidic residues. The region spanning 241-526 (ETNSLHCMGG…YSYFRFLKYD (286 aa)) is the Helicase ATP-binding domain. 254–261 (DDQGLGKT) serves as a coordination point for ATP. Disordered stretches follow at residues 293–337 (DADD…RKFN) and 439–462 (VVGT…SDPD). Over residues 439-451 (VVGTTKKSKKKKG) the composition is skewed to basic residues. Residues 679-718 (CCVCHDPPEDPVVTLCGHIFCYQCVSDYITGDEDTCPAPR) form an RING-type; degenerate zinc finger. The span at 779–798 (NQGTSNSTQNGQMASSSQQP) shows a compositional bias: polar residues. The segment at 779–808 (NQGTSNSTQNGQMASSSQQPNDDDDDDDDD) is disordered. Over residues 799-808 (NDDDDDDDDD) the composition is skewed to acidic residues. One can recognise a Helicase C-terminal domain in the interval 804-976 (DDDDDVTIVE…ATRLTVDDLK (173 aa)).

The protein belongs to the SNF2/RAD54 helicase family. RAD16 subfamily. Interacts with SUVR2.

It is found in the nucleus. Its function is as follows. Probable helicase-like transcription factor involved in transcriptional gene silencing. Associates with SUVR2 and contributes to transcriptional gene silencing at RNA-directed DNA methylation (RdDM) target loci but also at RdDM-independent target loci. May be involved in nucleosome positioning to form ordered nucleosome arrays on chromatin. Associates with SUVR2 and functions redundantly with FRG1. Required for the efficient methylation of a broad range of RdDM target loci. In Arabidopsis thaliana (Mouse-ear cress), this protein is Helicase-like transcription factor CHR28.